The chain runs to 356 residues: Phospho-2-dehydro-3-deoxyheptonate aldolase, Tyr-sensitive (356 aa).

The protein belongs to the class-I DAHP synthase family. It depends on a divalent metal cation as a cofactor.

The enzyme catalyses D-erythrose 4-phosphate + phosphoenolpyruvate + H2O = 7-phospho-2-dehydro-3-deoxy-D-arabino-heptonate + phosphate. The protein operates within metabolic intermediate biosynthesis; chorismate biosynthesis; chorismate from D-erythrose 4-phosphate and phosphoenolpyruvate: step 1/7. Its activity is regulated as follows. Specifically feedback inhibited by tyrosine with 50% inhibition observed at 9 microM tyrosine, pH 7.0. In terms of biological role, stereospecific condensation of phosphoenolpyruvate (PEP) and D-erythrose-4-phosphate (E4P) giving rise to 3-deoxy-D-arabino-heptulosonate-7-phosphate (DAHP). The protein is Phospho-2-dehydro-3-deoxyheptonate aldolase, Tyr-sensitive (aroF) of Escherichia coli (strain K12).